A 215-amino-acid chain; its full sequence is Chymomexicain (215 aa).

3 disulfides stabilise this stretch: C22-C63, C56-C96, and C154-C201. Residue C25 is part of the active site. Residues H160 and N176 contribute to the active site.

The protein belongs to the peptidase C1 family.

Functionally, cysteine protease. In Jacaratia mexicana (Wild papaya), this protein is Chymomexicain.